The sequence spans 630 residues: UvrABC system protein C (630 aa).

Residues 1-96 are disordered; it reads MGAEGLQGEG…GEAHRRGGTG (96 aa). Low complexity predominate over residues 9-28; sequence EGEVPPQGAGVPGQVQVGVH. The GIY-YIG domain occupies 52–125; that stretch reads DPRGLPVEAG…IKAHRPLYNV (74 aa). The span at 75–91 shows a compositional bias: basic and acidic residues; that stretch reads RPGEKLLPRRGQGEAHR. The UVR domain maps to 234-269; it reads DGLLQELEAKMREAARRLEFERAAEIRDQMEALRAF.

Belongs to the UvrC family. As to quaternary structure, interacts with UvrB in an incision complex.

It is found in the cytoplasm. In terms of biological role, the UvrABC repair system catalyzes the recognition and processing of DNA lesions. UvrC both incises the 5' and 3' sides of the lesion. The N-terminal half is responsible for the 3' incision and the C-terminal half is responsible for the 5' incision. The protein is UvrABC system protein C of Thermus thermophilus (strain ATCC BAA-163 / DSM 7039 / HB27).